Consider the following 145-residue polypeptide: Granulysin (145 aa).

The first 22 residues, 1-22, serve as a signal peptide directing secretion; the sequence is MATWALLLLAAMLLGNPGLVFS. Residues 62–142 form the Saposin B-type domain; sequence LGRDYRTCLT…EDLRLCIPST (81 aa). Disulfide bonds link Cys-69/Cys-132 and Cys-96/Cys-107.

A 9 kDa form is produced by proteolytic processing of a 15 kDa protein. Expressed in natural killer and T-cells.

Its subcellular location is the secreted. Its function is as follows. Antimicrobial protein that kills intracellular pathogens. Active against a broad range of microbes, including Gram-positive and Gram-negative bacteria, fungi, and parasites. Kills Mycobacterium tuberculosis. This Homo sapiens (Human) protein is Granulysin (GNLY).